The following is a 230-amino-acid chain: Cytidylate kinase (230 aa).

12–20 (GPSGAGKGT) contributes to the ATP binding site.

Belongs to the cytidylate kinase family. Type 1 subfamily.

The protein localises to the cytoplasm. It carries out the reaction CMP + ATP = CDP + ADP. The enzyme catalyses dCMP + ATP = dCDP + ADP. In Yersinia pseudotuberculosis serotype O:1b (strain IP 31758), this protein is Cytidylate kinase.